A 695-amino-acid chain; its full sequence is ATP-dependent permease MDL1, mitochondrial (695 aa).

A mitochondrion-targeting transit peptide spans 1-100; sequence MIVRMIRLCK…RLFVLSKPES (100 aa). The next 5 helical transmembrane spans lie at 103–123, 156–176, 242–262, 337–357, and 372–392; these read IGLA…VPSV, FTAL…RIII, FVGF…MMIL, GLFF…LLLV, and LSSF…LSSF. An ABC transmembrane type-1 domain is found at 103-398; it reads IGLALLLILI…LSSFYSELMK (296 aa). The region spanning 432–673 is the ABC transporter domain; the sequence is IVFKNVSFTY…PNSELNALLA (242 aa). Residue 467–474 participates in ATP binding; sequence GPSGSGKS.

Belongs to the ABC transporter superfamily. ABCB family. Mitochondrial peptide exporter (TC 3.A.1.212) subfamily.

Its subcellular location is the mitochondrion inner membrane. In terms of biological role, mediates export of peptides with molecular masses of 2100 to 600 daltons generated upon proteolysis of mitochondrial inner membrane proteins. In Saccharomyces cerevisiae (strain ATCC 204508 / S288c) (Baker's yeast), this protein is ATP-dependent permease MDL1, mitochondrial (MDL1).